A 261-amino-acid chain; its full sequence is G patch domain-containing protein 11 (261 aa).

3 disordered regions span residues 1-67, 88-124, and 184-213; these read MEEE…LNEA, ALGK…AEEN, and EAWY…LVEE. Basic and acidic residues-rich tracts occupy residues 29–64 and 111–124; these read RVKE…DTKL and IGHE…AEEN. Positions 31-65 form a coiled coil; sequence KECYEKEEKHKEANIKNRQQKLKDVEKEKRDTKLN. The region spanning 70–116 is the G-patch domain; sequence NENKGFALLQKMGYKKGQALGKKGDGIVEPIPLNIKTGRSGIGHEEM. Residues 190-222 adopt a coiled-coil conformation; sequence KMNEQEADEEADEETEEDEDLVEEELSTLEKLQ. The segment covering 194–213 has biased composition (acidic residues); sequence QEADEEADEETEEDEDLVEE.

It belongs to the GPATCH11 family.

The protein resides in the chromosome. Its subcellular location is the centromere. The protein localises to the kinetochore. This chain is G patch domain-containing protein 11 (gpatch11), found in Xenopus tropicalis (Western clawed frog).